A 263-amino-acid chain; its full sequence is 4-hydroxy-2-oxo-heptane-1,7-dioate aldolase (263 aa).

The active-site Proton acceptor is H45. Q147 lines the substrate pocket. E149 is a binding site for a divalent metal cation. Residues A174 and D175 each coordinate substrate. Residue D175 participates in a divalent metal cation binding.

Belongs to the HpcH/HpaI aldolase family. As to quaternary structure, homohexamer; trimer of dimers. The cofactor is a divalent metal cation.

It catalyses the reaction 4-hydroxy-2-oxoheptanedioate = succinate semialdehyde + pyruvate. The protein operates within aromatic compound metabolism; 4-hydroxyphenylacetate degradation; pyruvate and succinate semialdehyde from 4-hydroxyphenylacetate: step 7/7. Catalyzes the reversible retro-aldol cleavage of 4-hydroxy-2-ketoheptane-1,7-dioate (HKHD) to pyruvate and succinic semialdehyde. In Salmonella dublin (strain CT_02021853), this protein is 4-hydroxy-2-oxo-heptane-1,7-dioate aldolase.